The chain runs to 118 residues: Large ribosomal subunit protein bL20 (118 aa).

This sequence belongs to the bacterial ribosomal protein bL20 family. As to quaternary structure, part of the 50S ribosomal subunit. Contacts proteins L13 and L21.

Its function is as follows. Binds directly to 23S rRNA, probably serving to organize its structure. The protein is Large ribosomal subunit protein bL20 (rplT) of Deinococcus radiodurans (strain ATCC 13939 / DSM 20539 / JCM 16871 / CCUG 27074 / LMG 4051 / NBRC 15346 / NCIMB 9279 / VKM B-1422 / R1).